A 462-amino-acid polypeptide reads, in one-letter code: EPD1-interacting receptor-like cytoplasmic serine/threonine-protein kinase 5A (462 aa).

In terms of domain architecture, Protein kinase spans 85 to 366; it reads FSSANFLGEG…DVVNILEPLL (282 aa). Residues 91–99 and Lys-120 contribute to the ATP site; that span reads LGEGGFGPV. Phosphotyrosine is present on residues Tyr-165 and Tyr-167. Catalysis depends on Asp-215, which acts as the Proton acceptor.

It belongs to the protein kinase superfamily. Ser/Thr protein kinase family. In terms of assembly, interacts with the Verticillium dahliae elicitor EPD1 (AC G2WWH6). In terms of processing, phosphorylated at Tyr-165 and Tyr-167 in the presence of pathogen-associated molecular patterns (PAMPs); this triggers the expression of pathogenesis-related genes (e.g. PR5 and PR16). As to expression, mostly expressed in roots and, to a lesser extent, in leaves.

The protein resides in the cell membrane. It catalyses the reaction L-seryl-[protein] + ATP = O-phospho-L-seryl-[protein] + ADP + H(+). It carries out the reaction L-threonyl-[protein] + ATP = O-phospho-L-threonyl-[protein] + ADP + H(+). Its function is as follows. Required for pathogen-associated molecular pattern (PAMP, e.g. chitin and flg22)-triggered immunity (PTI) involving reactive oxygen species (ROS) accumulation and triggering plant defense, including defense-related gene expression (e.g. PR1 and LOX). Ensures specific recognition of the EPD1 effector of Verticillium dahliae, resulting in a hypersensitive response known as effector-triggered immunity (ETI), characterized by the activation of programmed cell death to limit infection by the pathogen. Priming plants with the incompatible pathogen V.dahliae leads to an increased resistance to compatible pathogens, as a result of systemic acquired resistance (SAR). The sequence is that of EPD1-interacting receptor-like cytoplasmic serine/threonine-protein kinase 5A from Gossypium barbadense (Sea Island cotton).